Consider the following 232-residue polypeptide: Large ribosomal subunit protein uL1 (232 aa).

Belongs to the universal ribosomal protein uL1 family. Part of the 50S ribosomal subunit.

In terms of biological role, binds directly to 23S rRNA. The L1 stalk is quite mobile in the ribosome, and is involved in E site tRNA release. Functionally, protein L1 is also a translational repressor protein, it controls the translation of the L11 operon by binding to its mRNA. The chain is Large ribosomal subunit protein uL1 from Xanthomonas oryzae pv. oryzae (strain KACC10331 / KXO85).